The primary structure comprises 236 residues: (5-formylfuran-3-yl)methyl phosphate synthase (236 aa).

The active-site Schiff-base intermediate with substrate is lysine 27. Catalysis depends on lysine 85, which acts as the Proton acceptor.

Belongs to the MfnB family.

The catalysed reaction is 2 D-glyceraldehyde 3-phosphate = 4-(hydroxymethyl)-2-furancarboxaldehyde phosphate + phosphate + 2 H2O. The protein operates within cofactor biosynthesis; methanofuran biosynthesis. Catalyzes the formation of 4-(hydroxymethyl)-2-furancarboxaldehyde phosphate (4-HFC-P) from two molecules of glyceraldehyde-3-P (GA-3-P). In Methanococcus maripaludis (strain C5 / ATCC BAA-1333), this protein is (5-formylfuran-3-yl)methyl phosphate synthase.